The chain runs to 213 residues: ATP synthase peripheral stalk subunit OSCP, mitochondrial (213 aa).

The N-terminal 23 residues, 1 to 23 (MAAPAVSGVSQQVRYFGTSVVRP), are a transit peptide targeting the mitochondrion. The SIFI-degron motif lies at 5–23 (AVSGVSQQVRYFGTSVVRP). N6-acetyllysine is present on residues Lys54, Lys60, Lys70, and Lys73. Residue Lys90 is modified to N6-succinyllysine. N6-acetyllysine; alternate occurs at positions 158 and 162. N6-succinyllysine; alternate occurs at positions 158 and 162. An N6-acetyllysine mark is found at Lys172, Lys176, and Lys192. N6-succinyllysine is present on Lys199.

This sequence belongs to the ATPase delta chain family. As to quaternary structure, component of the ATP synthase complex composed at least of ATP5F1A/subunit alpha, ATP5F1B/subunit beta, ATP5MC1/subunit c (homooctomer), MT-ATP6/subunit a, MT-ATP8/subunit 8, ATP5ME/subunit e, ATP5MF/subunit f, ATP5MG/subunit g, ATP5MK/subunit k, ATP5MJ/subunit j, ATP5F1C/subunit gamma, ATP5F1D/subunit delta, ATP5F1E/subunit epsilon, ATP5PF/subunit F6, ATP5PB/subunit b, ATP5PD/subunit d, ATP5PO/subunit OSCP. ATP synthase complex consists of a soluble F(1) head domain (subunits alpha(3) and beta(3)) - the catalytic core - and a membrane F(0) domain - the membrane proton channel (subunits c, a, 8, e, f, g, k and j). These two domains are linked by a central stalk (subunits gamma, delta, and epsilon) rotating inside the F1 region and a stationary peripheral stalk (subunits F6, b, d, and OSCP). Acetylation at Lys-162 decreases ATP production. Deacetylated by SIRT3. Post-translationally, in response to mitochondrial stress, the precursor protein is ubiquitinated by the SIFI complex in the cytoplasm before mitochondrial import, leading to its degradation. Within the SIFI complex, UBR4 initiates ubiquitin chain that are further elongated or branched by KCMF1.

It is found in the mitochondrion. The protein resides in the mitochondrion inner membrane. Subunit OSCP, of the mitochondrial membrane ATP synthase complex (F(1)F(0) ATP synthase or Complex V) that produces ATP from ADP in the presence of a proton gradient across the membrane which is generated by electron transport complexes of the respiratory chain. ATP synthase complex consist of a soluble F(1) head domain - the catalytic core - and a membrane F(1) domain - the membrane proton channel. These two domains are linked by a central stalk rotating inside the F(1) region and a stationary peripheral stalk. During catalysis, ATP synthesis in the catalytic domain of F(1) is coupled via a rotary mechanism of the central stalk subunits to proton translocation. In vivo, can only synthesize ATP although its ATP hydrolase activity can be activated artificially in vitro. Part of the complex F(0) domain. Part of the complex F(0) domain and the peripheric stalk, which acts as a stator to hold the catalytic alpha(3)beta(3) subcomplex and subunit a/ATP6 static relative to the rotary elements. This chain is ATP synthase peripheral stalk subunit OSCP, mitochondrial, found in Callithrix jacchus (White-tufted-ear marmoset).